Reading from the N-terminus, the 918-residue chain is Probable lipoxygenase 6 (918 aa).

The interval 56 to 76 is disordered; that stretch reads AASPSSGIKGGGAGERRPAPE. The region spanning 90–218 is the PLAT domain; that stretch reads QKEDIKEAVA…ELPTKRVFFS (129 aa). The region spanning 221–918 is the Lipoxygenase domain; the sequence is PYLPSETPPG…CRGVPNSISI (698 aa). Positions 573, 578, 765, 769, and 918 each coordinate Fe cation.

It belongs to the lipoxygenase family. Requires Fe cation as cofactor.

It carries out the reaction (9Z,12Z)-octadecadienoate + O2 = (13S)-hydroperoxy-(9Z,11E)-octadecadienoate. The enzyme catalyses (9Z,12Z,15Z)-octadecatrienoate + O2 = (13S)-hydroperoxy-(9Z,11E,15Z)-octadecatrienoate. It functions in the pathway lipid metabolism; oxylipin biosynthesis. Plant lipoxygenase may be involved in a number of diverse aspects of plant physiology including growth and development, pest resistance, and senescence or responses to wounding. Catalyzes the hydroperoxidation of lipids containing a cis,cis-1,4-pentadiene structure. The protein is Probable lipoxygenase 6 of Oryza sativa subsp. japonica (Rice).